We begin with the raw amino-acid sequence, 263 residues long: Undecaprenyl-diphosphatase 2 (263 aa).

A run of 8 helical transmembrane segments spans residues 15-37 (GLTE…LLGF), 42-62 (AKVF…VIFW), 83-103 (LHII…HSAI), 106-126 (VLFG…LMIV), 142-162 (ITYK…WPGF), 183-203 (AEYT…LDLI), 216-236 (LFAT…VSFL), and 242-262 (VKLT…YFFI).

The protein belongs to the UppP family.

The protein localises to the cell membrane. It catalyses the reaction di-trans,octa-cis-undecaprenyl diphosphate + H2O = di-trans,octa-cis-undecaprenyl phosphate + phosphate + H(+). Functionally, catalyzes the dephosphorylation of undecaprenyl diphosphate (UPP). Confers resistance to bacitracin. The chain is Undecaprenyl-diphosphatase 2 from Bacillus cereus (strain ATCC 10987 / NRS 248).